Consider the following 239-residue polypeptide: Methylthioribulose-1-phosphate dehydratase (239 aa).

C94 lines the substrate pocket. Zn(2+) contacts are provided by H112 and H114. E136 functions as the Proton donor/acceptor in the catalytic mechanism. H192 contacts Zn(2+).

It belongs to the aldolase class II family. MtnB subfamily. Requires Zn(2+) as cofactor.

The protein localises to the cytoplasm. It carries out the reaction 5-(methylsulfanyl)-D-ribulose 1-phosphate = 5-methylsulfanyl-2,3-dioxopentyl phosphate + H2O. The protein operates within amino-acid biosynthesis; L-methionine biosynthesis via salvage pathway; L-methionine from S-methyl-5-thio-alpha-D-ribose 1-phosphate: step 2/6. Catalyzes the dehydration of methylthioribulose-1-phosphate (MTRu-1-P) into 2,3-diketo-5-methylthiopentyl-1-phosphate (DK-MTP-1-P). Functions in the methionine salvage pathway. May play a role in apoptosis. The polypeptide is Methylthioribulose-1-phosphate dehydratase (Xenopus laevis (African clawed frog)).